Reading from the N-terminus, the 446-residue chain is Phosphoglucosamine mutase (446 aa).

The Phosphoserine intermediate role is filled by Ser102. Mg(2+) contacts are provided by Ser102, Asp241, Asp243, and Asp245. Position 102 is a phosphoserine (Ser102).

It belongs to the phosphohexose mutase family. The cofactor is Mg(2+). Activated by phosphorylation.

It catalyses the reaction alpha-D-glucosamine 1-phosphate = D-glucosamine 6-phosphate. Functionally, catalyzes the conversion of glucosamine-6-phosphate to glucosamine-1-phosphate. In Xylella fastidiosa (strain M23), this protein is Phosphoglucosamine mutase.